The chain runs to 560 residues: Calcium-binding and coiled-coil domain-containing protein 1-A (560 aa).

2 coiled-coil regions span residues 156-192 and 367-480; these read KATF…EKRI and WWQE…DKML. Residues 480–517 form a disordered region; sequence LMEDKTDSSPPTLSVDLSDSDDESPGDEGVSQQLGPCS. Low complexity predominate over residues 487–496; it reads SSPPTLSVDL.

This sequence belongs to the CALCOCO family.

The protein resides in the cytoplasm. It localises to the nucleus. In terms of biological role, may function as a coactivator for aryl hydrocarbon and nuclear receptors. The polypeptide is Calcium-binding and coiled-coil domain-containing protein 1-A (calcoco1-a) (Xenopus laevis (African clawed frog)).